The following is a 71-amino-acid chain: Exodeoxyribonuclease 7 small subunit (71 aa).

It belongs to the XseB family. As to quaternary structure, heterooligomer composed of large and small subunits.

The protein localises to the cytoplasm. It carries out the reaction Exonucleolytic cleavage in either 5'- to 3'- or 3'- to 5'-direction to yield nucleoside 5'-phosphates.. In terms of biological role, bidirectionally degrades single-stranded DNA into large acid-insoluble oligonucleotides, which are then degraded further into small acid-soluble oligonucleotides. In Clostridium botulinum (strain 657 / Type Ba4), this protein is Exodeoxyribonuclease 7 small subunit.